Consider the following 342-residue polypeptide: Pyrophosphate--fructose 6-phosphate 1-phosphotransferase (342 aa).

Residue Gly10 participates in diphosphate binding. Residue Glu103 participates in Mg(2+) binding. Residues 126-128, Arg163, 170-172, Glu222, Arg266, and 272-275 each bind substrate; these read TID, MGR, and HVQR. The active-site Proton acceptor is the Asp128.

It belongs to the phosphofructokinase type A (PFKA) family. Mixed-substrate PFK group III subfamily. As to quaternary structure, homodimer or homotetramer. Requires Mg(2+) as cofactor.

It is found in the cytoplasm. The enzyme catalyses beta-D-fructose 6-phosphate + diphosphate = beta-D-fructose 1,6-bisphosphate + phosphate + H(+). It participates in carbohydrate degradation; glycolysis; D-glyceraldehyde 3-phosphate and glycerone phosphate from D-glucose: step 3/4. Its activity is regulated as follows. Non-allosteric. Functionally, catalyzes the phosphorylation of D-fructose 6-phosphate, the first committing step of glycolysis. Uses inorganic phosphate (PPi) as phosphoryl donor instead of ATP like common ATP-dependent phosphofructokinases (ATP-PFKs), which renders the reaction reversible, and can thus function both in glycolysis and gluconeogenesis. Consistently, PPi-PFK can replace the enzymes of both the forward (ATP-PFK) and reverse (fructose-bisphosphatase (FBPase)) reactions. This is Pyrophosphate--fructose 6-phosphate 1-phosphotransferase from Streptomyces coelicolor (strain ATCC BAA-471 / A3(2) / M145).